A 178-amino-acid chain; its full sequence is Probable DNA-directed RNA polymerase subunit delta (178 aa).

The HTH HARE-type domain occupies 14–81 (LSMIEVAHAI…GENTWGLRTW (68 aa)). Positions 120–143 (DDDVIDYDSDDPEDEEVEAEDTTS) are enriched in acidic residues. The tract at residues 120–178 (DDDVIDYDSDDPEDEEVEAEDTTSDDAPAFEDLSNDDDTDVLPDGIEGQLSELNEDDEN) is disordered.

Belongs to the RpoE family. RNAP is composed of a core of 2 alpha, a beta and a beta' subunits. The core is associated with a delta subunit and one of several sigma factors.

Its function is as follows. Participates in both the initiation and recycling phases of transcription. In the presence of the delta subunit, RNAP displays an increased specificity of transcription, a decreased affinity for nucleic acids, and an increased efficiency of RNA synthesis because of enhanced recycling. This Pediococcus pentosaceus (strain ATCC 25745 / CCUG 21536 / LMG 10740 / 183-1w) protein is Probable DNA-directed RNA polymerase subunit delta.